The primary structure comprises 51 residues: 2,3,4,5-tetrahydropyridine-2,6-dicarboxylate N-succinyltransferase (51 aa).

The protein belongs to the transferase hexapeptide repeat family. In terms of assembly, homotrimer.

The protein localises to the cytoplasm. The catalysed reaction is (S)-2,3,4,5-tetrahydrodipicolinate + succinyl-CoA + H2O = (S)-2-succinylamino-6-oxoheptanedioate + CoA. Its pathway is amino-acid biosynthesis; L-lysine biosynthesis via DAP pathway; LL-2,6-diaminopimelate from (S)-tetrahydrodipicolinate (succinylase route): step 1/3. The protein is 2,3,4,5-tetrahydropyridine-2,6-dicarboxylate N-succinyltransferase (dapD) of Klebsiella oxytoca.